Reading from the N-terminus, the 125-residue chain is UPF0102 protein PSPA7_4996 (125 aa).

It belongs to the UPF0102 family.

The sequence is that of UPF0102 protein PSPA7_4996 from Pseudomonas paraeruginosa (strain DSM 24068 / PA7) (Pseudomonas aeruginosa (strain PA7)).